The chain runs to 284 residues: Four and a half LIM domains protein 5 (284 aa).

The C4-type zinc finger occupies 8 to 32 (CQYCTSSLIGKKYVLKDDNLYCISC). LIM zinc-binding domains are found at residues 39-100 (NYCE…ECSS), 101-160 (KCFH…KEFA), and 161-220 (HYCN…LYAK).

In terms of assembly, interacts with CREM (via the third LIM domain). Interacts (via second LIM domain) with SPAG8. Testis-specific, temporal expression is coordinated with CREM.

The protein resides in the nucleus. May be involved in the regulation of spermatogenesis. Stimulates CREM transcriptional activity in a phosphorylation-independent manner. This is Four and a half LIM domains protein 5 (Fhl5) from Mus musculus (Mouse).